The primary structure comprises 547 residues: Carboxypeptidase N subunit 2 (547 aa).

Positions 1 to 21 are cleaved as a signal peptide; that stretch reads MFPGAWLCWVSLLLLARLTQP. The 28-residue stretch at 22-49 folds into the LRRNT domain; sequence CPVGCDCFGREVFCSDEQLADIPPDIPP. Residues N74, N111, and N119 are each glycosylated (N-linked (GlcNAc...) asparagine). LRR repeat units follow at residues 98–119, 122–143, 146–167, 170–191, 194–215, 218–239, 242–263, 266–287, 290–311, 314–335, 338–359, and 362–383; these read RLQDLEITGSPVSNLSAHIFSN, SLEKLTLDFDRLAGLPEDLFCH, ILESLQLQGNQLRTLPGRLFQS, DLRTLNLAQNLLTQLPKGAFQS, GLQMLKLSNNMLARLPEGALGS, SLQELFLDGNAITELSPHLFSQ, SLEMLWLQHNAICHLPVSLFSS, NLTFLSLKDNALRTLPEGLFAH, GLLHLSLSYNQLETIPEGAFTN, RLVSLTLSHNAITDLPEHVFRN, QLVKLSLDSNNLTALHPALFHN, and RLQLLNLSRNQLTTLPGGIFDT. N-linked (GlcNAc...) asparagine glycans are attached at residues N266 and N311. 3 N-linked (GlcNAc...) asparagine glycosylation sites follow: N348, N359, and N367. The 53-residue stretch at 395 to 447 folds into the LRRCT domain; it reads NPWQCDCHLSYLTSWLRLYNNQISNTHTFCAGPAYLKGQLVPNLKQEQLICPV. N520 carries N-linked (GlcNAc...) asparagine glycosylation.

Tetramer of two catalytic chains and two glycosylated inactive chains.

The protein localises to the secreted. Functionally, the 83 kDa subunit binds and stabilizes the catalytic subunit at 37 degrees Celsius and keeps it in circulation. Under some circumstances it may be an allosteric modifier of the catalytic subunit. This chain is Carboxypeptidase N subunit 2 (Cpn2), found in Mus musculus (Mouse).